The chain runs to 118 residues: Group 1 truncated hemoglobin GlbN (118 aa).

Residue His70 coordinates heme.

This sequence belongs to the truncated hemoglobin family. Group I subfamily. In terms of assembly, monomer. Requires heme as cofactor.

It localises to the membrane. This is Group 1 truncated hemoglobin GlbN (glbN) from Nostoc commune.